The primary structure comprises 289 residues: 33 kDa chaperonin (289 aa).

2 disulfide bridges follow: Cys-235–Cys-237 and Cys-268–Cys-271.

This sequence belongs to the HSP33 family. Under oxidizing conditions two disulfide bonds are formed involving the reactive cysteines. Under reducing conditions zinc is bound to the reactive cysteines and the protein is inactive.

The protein localises to the cytoplasm. Its function is as follows. Redox regulated molecular chaperone. Protects both thermally unfolding and oxidatively damaged proteins from irreversible aggregation. Plays an important role in the bacterial defense system toward oxidative stress. This is 33 kDa chaperonin from Bacillus licheniformis (strain ATCC 14580 / DSM 13 / JCM 2505 / CCUG 7422 / NBRC 12200 / NCIMB 9375 / NCTC 10341 / NRRL NRS-1264 / Gibson 46).